A 129-amino-acid chain; its full sequence is Glutaredoxin-like protein ECU08_1380 (129 aa).

Residues 26 to 126 (EADYGEMVRR…PLLTQNREPV (101 aa)) enclose the Glutaredoxin domain.

The protein belongs to the glutaredoxin family.

The protein localises to the cytoplasm. Functionally, has a glutathione-disulfide oxidoreductase activity in the presence of NADPH and glutathione reductase. Reduces low molecular weight disulfides and proteins. In Encephalitozoon cuniculi (strain GB-M1) (Microsporidian parasite), this protein is Glutaredoxin-like protein ECU08_1380.